The chain runs to 80 residues: D-alanyl carrier protein 1 (80 aa).

In terms of domain architecture, Carrier spans 1–80 (MTMDDTKATV…KIVAKVENLQ (80 aa)). At S38 the chain carries O-(pantetheine 4'-phosphoryl)serine.

This sequence belongs to the DltC family. 4'-phosphopantetheine is transferred from CoA to a specific serine of apo-DCP.

It localises to the cytoplasm. It participates in cell wall biogenesis; lipoteichoic acid biosynthesis. Carrier protein involved in the D-alanylation of lipoteichoic acid (LTA). The loading of thioester-linked D-alanine onto DltC is catalyzed by D-alanine--D-alanyl carrier protein ligase DltA. The DltC-carried D-alanyl group is further transferred to cell membrane phosphatidylglycerol (PG) by forming an ester bond, probably catalyzed by DltD. D-alanylation of LTA plays an important role in modulating the properties of the cell wall in Gram-positive bacteria, influencing the net charge of the cell wall. This is D-alanyl carrier protein 1 from Lactiplantibacillus plantarum (strain ATCC BAA-793 / NCIMB 8826 / WCFS1) (Lactobacillus plantarum).